A 675-amino-acid polypeptide reads, in one-letter code: Myosin-binding protein 3 (675 aa).

A helical membrane pass occupies residues 17-37 (ITVILVYAFLEWLLMFFIFLN). Disordered stretches follow at residues 225-274 (LRSI…EEET) and 286-315 (SKNFTGSQIEEEEEDREETTKELDPETPTS). Residues 238–251 (AKSRVSEDEQRNDD) show a composition bias toward basic and acidic residues. The GTD-binding domain maps to 355–453 (RTIERLRETV…QLQRELEVYR (99 aa)). Over residues 474–496 (CEADDDDKEEENREEDNSSEMDV) the composition is skewed to acidic residues. Disordered regions lie at residues 474–497 (CEADDDDKEEENREEDNSSEMDVD), 542–565 (DKESAEDPGEFSNSYEEASNGHGG), and 582–605 (AENESEDGSQGLPESDEKNFGSDS). A compositionally biased stretch (basic and acidic residues) spans 596 to 605 (SDEKNFGSDS). A coiled-coil region spans residues 605-633 (SEKLEIIKQVDSVYERLQELETDGEFLKN).

As to quaternary structure, interacts with myosin XI-K.

Its subcellular location is the membrane. In terms of biological role, membrane-anchored myosin receptors that define a distinct, plant-specific transport vesicle compartment. The polypeptide is Myosin-binding protein 3 (Arabidopsis thaliana (Mouse-ear cress)).